A 186-amino-acid chain; its full sequence is Crossover junction endodeoxyribonuclease RuvC (186 aa).

Active-site residues include Asp7, Glu67, and Asp140. Positions 7, 67, and 140 each coordinate Mg(2+).

Belongs to the RuvC family. In terms of assembly, homodimer which binds Holliday junction (HJ) DNA. The HJ becomes 2-fold symmetrical on binding to RuvC with unstacked arms; it has a different conformation from HJ DNA in complex with RuvA. In the full resolvosome a probable DNA-RuvA(4)-RuvB(12)-RuvC(2) complex forms which resolves the HJ. Mg(2+) serves as cofactor.

It is found in the cytoplasm. The enzyme catalyses Endonucleolytic cleavage at a junction such as a reciprocal single-stranded crossover between two homologous DNA duplexes (Holliday junction).. Its function is as follows. The RuvA-RuvB-RuvC complex processes Holliday junction (HJ) DNA during genetic recombination and DNA repair. Endonuclease that resolves HJ intermediates. Cleaves cruciform DNA by making single-stranded nicks across the HJ at symmetrical positions within the homologous arms, yielding a 5'-phosphate and a 3'-hydroxyl group; requires a central core of homology in the junction. The consensus cleavage sequence is 5'-(A/T)TT(C/G)-3'. Cleavage occurs on the 3'-side of the TT dinucleotide at the point of strand exchange. HJ branch migration catalyzed by RuvA-RuvB allows RuvC to scan DNA until it finds its consensus sequence, where it cleaves and resolves the cruciform DNA. This chain is Crossover junction endodeoxyribonuclease RuvC, found in Chloroherpeton thalassium (strain ATCC 35110 / GB-78).